Consider the following 99-residue polypeptide: Acylphosphatase (99 aa).

In terms of domain architecture, Acylphosphatase-like spans 11–97; the sequence is ARRIHVKGKV…VVAQGFTQKP (87 aa). Catalysis depends on residues Arg-26 and Asn-44.

Belongs to the acylphosphatase family.

The catalysed reaction is an acyl phosphate + H2O = a carboxylate + phosphate + H(+). In Rhizorhabdus wittichii (strain DSM 6014 / CCUG 31198 / JCM 15750 / NBRC 105917 / EY 4224 / RW1) (Sphingomonas wittichii), this protein is Acylphosphatase (acyP).